Here is a 226-residue protein sequence, read N- to C-terminus: Peroxiredoxin-like 2C (226 aa).

It belongs to the peroxiredoxin-like PRXL2 family. PRXL2C subfamily. Expressed in gastric tissues.

Its function is as follows. May positively regulate ERK1/2 signaling and AKT1 activation leading to HIF1A up-regulation with an increased expression of glycolysis genes and enhanced glycolysis. In Homo sapiens (Human), this protein is Peroxiredoxin-like 2C.